Reading from the N-terminus, the 126-residue chain is Large ribosomal subunit protein uL29 (126 aa).

Belongs to the universal ribosomal protein uL29 family.

The protein is Large ribosomal subunit protein uL29 (rpl35) of Dictyostelium discoideum (Social amoeba).